A 494-amino-acid polypeptide reads, in one-letter code: Lysine--tRNA ligase (494 aa).

Positions 407 and 414 each coordinate Mg(2+).

It belongs to the class-II aminoacyl-tRNA synthetase family. As to quaternary structure, homodimer. It depends on Mg(2+) as a cofactor.

The protein resides in the cytoplasm. It carries out the reaction tRNA(Lys) + L-lysine + ATP = L-lysyl-tRNA(Lys) + AMP + diphosphate. The sequence is that of Lysine--tRNA ligase from Lactococcus lactis subsp. cremoris (strain MG1363).